We begin with the raw amino-acid sequence, 513 residues long: Histidine ammonia-lyase (513 aa).

The 5-imidazolinone (Ala-Gly) cross-link spans 144 to 146 (ASG). Ser-145 is subject to 2,3-didehydroalanine (Ser).

This sequence belongs to the PAL/histidase family. Contains an active site 4-methylidene-imidazol-5-one (MIO), which is formed autocatalytically by cyclization and dehydration of residues Ala-Ser-Gly.

Its subcellular location is the cytoplasm. It catalyses the reaction L-histidine = trans-urocanate + NH4(+). Its pathway is amino-acid degradation; L-histidine degradation into L-glutamate; N-formimidoyl-L-glutamate from L-histidine: step 1/3. The polypeptide is Histidine ammonia-lyase (Streptococcus pyogenes serotype M49 (strain NZ131)).